The following is a 213-amino-acid chain: Uridine kinase (213 aa).

G15 to S22 lines the ATP pocket.

Belongs to the uridine kinase family.

The protein localises to the cytoplasm. The enzyme catalyses uridine + ATP = UMP + ADP + H(+). It catalyses the reaction cytidine + ATP = CMP + ADP + H(+). The protein operates within pyrimidine metabolism; CTP biosynthesis via salvage pathway; CTP from cytidine: step 1/3. Its pathway is pyrimidine metabolism; UMP biosynthesis via salvage pathway; UMP from uridine: step 1/1. This chain is Uridine kinase, found in Serratia proteamaculans (strain 568).